We begin with the raw amino-acid sequence, 98 residues long: Late cornified envelope-like proline-rich protein 1 (98 aa).

Positions 1–26 (MSSDDKSKSNDPKTEPKNCDPKCEQK) are disordered.

Belongs to the cornifin (SPRR) family.

This chain is Late cornified envelope-like proline-rich protein 1 (LELP1), found in Homo sapiens (Human).